We begin with the raw amino-acid sequence, 228 residues long: Orotidine 5'-phosphate decarboxylase (228 aa).

Substrate-binding positions include Asp8, Lys30, 59–68 (DLKLHDIPNT), Thr118, Arg178, Gln187, Gly207, and Arg208. Residue Lys61 is the Proton donor of the active site.

The protein belongs to the OMP decarboxylase family. Type 1 subfamily. As to quaternary structure, homodimer.

The enzyme catalyses orotidine 5'-phosphate + H(+) = UMP + CO2. It participates in pyrimidine metabolism; UMP biosynthesis via de novo pathway; UMP from orotate: step 2/2. Catalyzes the decarboxylation of orotidine 5'-monophosphate (OMP) to uridine 5'-monophosphate (UMP). This Wolinella succinogenes (strain ATCC 29543 / DSM 1740 / CCUG 13145 / JCM 31913 / LMG 7466 / NCTC 11488 / FDC 602W) (Vibrio succinogenes) protein is Orotidine 5'-phosphate decarboxylase.